The chain runs to 559 residues: 2-succinyl-5-enolpyruvyl-6-hydroxy-3-cyclohexene-1-carboxylate synthase (559 aa).

This sequence belongs to the TPP enzyme family. MenD subfamily. As to quaternary structure, homodimer. The cofactor is Mg(2+). It depends on Mn(2+) as a cofactor. Thiamine diphosphate is required as a cofactor.

It catalyses the reaction isochorismate + 2-oxoglutarate + H(+) = 5-enolpyruvoyl-6-hydroxy-2-succinyl-cyclohex-3-ene-1-carboxylate + CO2. It participates in quinol/quinone metabolism; 1,4-dihydroxy-2-naphthoate biosynthesis; 1,4-dihydroxy-2-naphthoate from chorismate: step 2/7. The protein operates within quinol/quinone metabolism; menaquinone biosynthesis. Catalyzes the thiamine diphosphate-dependent decarboxylation of 2-oxoglutarate and the subsequent addition of the resulting succinic semialdehyde-thiamine pyrophosphate anion to isochorismate to yield 2-succinyl-5-enolpyruvyl-6-hydroxy-3-cyclohexene-1-carboxylate (SEPHCHC). In Cytophaga hutchinsonii (strain ATCC 33406 / DSM 1761 / CIP 103989 / NBRC 15051 / NCIMB 9469 / D465), this protein is 2-succinyl-5-enolpyruvyl-6-hydroxy-3-cyclohexene-1-carboxylate synthase.